A 518-amino-acid chain; its full sequence is MAKQTFLKGTLILIAAGMVTRMLGFVNRVVIARFIGEEGVGLYMMAAPTFFLATTLTQFGLPVAISKLVAEASARGDHQKTKNILVMSLTITGVLSLIFTPLFLFFAPVMAETMLTDKRTLYPLLAITPVVPIIAISSVLRGYFQGKQNMNPLAMSQVLEQVVRISLVAVCTTIFLPYGIEYAAAGAMLSSVAGELASLLYLFVCFKYKKTIKIRKHFLQSIKNGKQTFTQLMSVSLPTTGSRFIGNLSWFFEPIVVAQSLAIAGVATVAATKQYGELTGFAMTLLTLPSFITYSLSTALVPAISEGMEQKKLQVVEYRLEQAMRLCLLSGGISVVILFVFADELMRVMYGSSGAAVFIKVMAPFFLLYYFQGPLQAVLQALNLAGAAMMNSLIGALVKTGLIFVLATRPSLGIMGAALAIVTGMVLVTLLHAATVSKVLPISIKIKEYALSFAVIVICGFISSAIKQYISFGASEAVNLAGWIAASAAIYMILLLVFRLIKKDELRRIPIIGRLIIR.

14 consecutive transmembrane segments (helical) span residues 6-26 (FLKGTLILIAAGMVTRMLGFV), 45-65 (MAAPTFFLATTLTQFGLPVAI), 91-111 (ITGVLSLIFTPLFLFFAPVMA), 120-140 (TLYPLLAITPVVPIIAISSVL), 165-185 (ISLVAVCTTIFLPYGIEYAAA), 186-206 (GAMLSSVAGELASLLYLFVCF), 250-270 (WFFEPIVVAQSLAIAGVATVA), 281-301 (FAMTLLTLPSFITYSLSTALV), 326-346 (LCLLSGGISVVILFVFADELM), 348-368 (VMYGSSGAAVFIKVMAPFFLL), 387-407 (AAMMNSLIGALVKTGLIFVLA), 411-431 (SLGIMGAALAIVTGMVLVTLL), 446-466 (IKEYALSFAVIVICGFISSAI), and 478-498 (VNLAGWIAASAAIYMILLLVF).

It belongs to the polysaccharide synthase family.

It is found in the cell membrane. Its function is as follows. Involved, directly or indirectly, in spore cortex biosynthesis. Affects only indirectly the expression of late sporulation genes. This chain is Stage V sporulation protein B (spoVB), found in Bacillus subtilis (strain 168).